The chain runs to 122 residues: Ribonuclease P protein component (122 aa).

The protein belongs to the RnpA family. Consists of a catalytic RNA component (M1 or rnpB) and a protein subunit.

It carries out the reaction Endonucleolytic cleavage of RNA, removing 5'-extranucleotides from tRNA precursor.. Its function is as follows. RNaseP catalyzes the removal of the 5'-leader sequence from pre-tRNA to produce the mature 5'-terminus. It can also cleave other RNA substrates such as 4.5S RNA. The protein component plays an auxiliary but essential role in vivo by binding to the 5'-leader sequence and broadening the substrate specificity of the ribozyme. In Roseiflexus sp. (strain RS-1), this protein is Ribonuclease P protein component.